The following is a 256-amino-acid chain: MGQKTNPNGLRLGIIRTWESKWYADQKDVPALIKEDALIREFLNENFSKAGVSQIEIERVKAKSKERVTIKLYVSKPGIALGKEASVKNKAVSTLEYLTKKEVILNIIEVRRPEKVAVLVAQSIAEQLENRASFRRAQKMAIQRALKSGAKGIRTLVSGRLGGAEMARSEGYSEGRVPLHTLRADVDYATAEAKTTYGILGIKVWIYHGEVLPGQSILDTRKPFEAGNQKRGQKRRPRNDQPGQRPQQRNRNSKED.

Positions 39 to 111 (IREFLNENFS…EVILNIIEVR (73 aa)) constitute a KH type-2 domain. The tract at residues 219–256 (DTRKPFEAGNQKRGQKRRPRNDQPGQRPQQRNRNSKED) is disordered. Positions 240 to 250 (DQPGQRPQQRN) are enriched in low complexity.

The protein belongs to the universal ribosomal protein uS3 family. In terms of assembly, part of the 30S ribosomal subunit. Forms a tight complex with proteins S10 and S14.

Its function is as follows. Binds the lower part of the 30S subunit head. Binds mRNA in the 70S ribosome, positioning it for translation. This chain is Small ribosomal subunit protein uS3, found in Acholeplasma laidlawii (strain PG-8A).